The chain runs to 569 residues: Glucose-6-phosphate isomerase, cytosolic 2A (569 aa).

E360 (proton donor) is an active-site residue. Catalysis depends on residues H391 and K516.

It belongs to the GPI family. As to quaternary structure, homodimer.

It localises to the cytoplasm. It carries out the reaction alpha-D-glucose 6-phosphate = beta-D-fructose 6-phosphate. It participates in carbohydrate degradation; glycolysis; D-glyceraldehyde 3-phosphate and glycerone phosphate from D-glucose: step 2/4. The sequence is that of Glucose-6-phosphate isomerase, cytosolic 2A (PGIC2-A) from Clarkia lewisii (Farewell-to-spring).